Consider the following 448-residue polypeptide: Senescence/dehydration-associated protein At4g35985, chloroplastic (448 aa).

Residues 1–36 (MECSATPPKLYPTVDTSTTVAPLPKSSSSSSSTNNN) form a disordered region. A chloroplast-targeting transit peptide spans 1–56 (MECSATPPKLYPTVDTSTTVAPLPKSSSSSSSTNNNNLYPSINVNDLVNNIFPDPT). A compositionally biased stretch (low complexity) spans 26-36 (SSSSSSSTNNN). One can recognise a Senescence domain in the interval 248-416 (IAAGSGQLIK…AWTVFKIRQA (169 aa)). The tract at residues 422 to 448 (AMKPSSLAKTVVKTAAKERKKGKKSSK) is disordered. A compositionally biased stretch (basic residues) spans 439-448 (ERKKGKKSSK).

In terms of tissue distribution, expressed in leaves (especially in midribs and trichomes), apical meristemic regions, stems, roots and flowers.

It localises to the plastid. The protein resides in the chloroplast. The sequence is that of Senescence/dehydration-associated protein At4g35985, chloroplastic from Arabidopsis thaliana (Mouse-ear cress).